The primary structure comprises 582 residues: ABC transporter-like protein ECU11_1340 (582 aa).

One can recognise an ABC transporter domain in the interval 15-257; that stretch reads VPNQNLSSNE…LGTKGIHNDG (243 aa). Residue 47–54 participates in ATP binding; that stretch reads GTSGSGKT. In terms of domain architecture, ABC transmembrane type-2 spans 316–519; it reads YVSFQMAIRQ…EIDAFISNFF (204 aa). 6 consecutive transmembrane segments (helical) span residues 335–355, 359–378, 412–432, 436–456, 482–502, and 551–571; these read ILYS…GKYI, FSIA…YVMN, TLVS…FGLI, HAFL…SMLF, GALL…SVIP, and SFLR…SSIL.

Belongs to the ABC transporter superfamily.

It is found in the membrane. This chain is ABC transporter-like protein ECU11_1340, found in Encephalitozoon cuniculi (strain GB-M1) (Microsporidian parasite).